The primary structure comprises 181 residues: Putative adenylate kinase (181 aa).

ATP is bound by residues Gly-10, Gly-12, Lys-13, Ser-14, and Thr-15. The interval 35–58 is NMP; that stretch reads NITEVVSKNGLYLEKDIEMDSYVV. An LID region spans residues 106–116; the sequence is SRNYSSEKVKE. ATP-binding residues include Arg-107 and Lys-147.

The protein belongs to the adenylate kinase family. AK6 subfamily. Interacts with uS11. Not a structural component of 40S pre-ribosomes, but transiently interacts with them by binding to uS11.

The catalysed reaction is AMP + ATP = 2 ADP. It catalyses the reaction ATP + H2O = ADP + phosphate + H(+). In terms of biological role, broad-specificity nucleoside monophosphate (NMP) kinase that catalyzes the reversible transfer of the terminal phosphate group between nucleoside triphosphates and monophosphates. Also has ATPase activity. Involved in the late maturation steps of the 30S ribosomal particles, specifically 16S rRNA maturation. While NMP activity is not required for ribosome maturation, ATPase activity is. Associates transiently with small ribosomal subunit protein uS11. ATP hydrolysis breaks the interaction with uS11. May temporarily remove uS11 from the ribosome to enable a conformational change of the ribosomal RNA that is needed for the final maturation step of the small ribosomal subunit. The protein is Putative adenylate kinase of Methanococcus maripaludis (strain C7 / ATCC BAA-1331).